The sequence spans 358 residues: Nicotinate-nucleotide--dimethylbenzimidazole phosphoribosyltransferase (358 aa).

The active-site Proton acceptor is glutamate 314.

This sequence belongs to the CobT family.

The enzyme catalyses 5,6-dimethylbenzimidazole + nicotinate beta-D-ribonucleotide = alpha-ribazole 5'-phosphate + nicotinate + H(+). It functions in the pathway nucleoside biosynthesis; alpha-ribazole biosynthesis; alpha-ribazole from 5,6-dimethylbenzimidazole: step 1/2. Catalyzes the synthesis of alpha-ribazole-5'-phosphate from nicotinate mononucleotide (NAMN) and 5,6-dimethylbenzimidazole (DMB). The sequence is that of Nicotinate-nucleotide--dimethylbenzimidazole phosphoribosyltransferase from Mycobacterium marinum (strain ATCC BAA-535 / M).